An 84-amino-acid chain; its full sequence is Beta-defensin 119 (84 aa).

The signal sequence occupies residues 1-21; sequence MKLLYLFLAILLAIEEPVISG. Intrachain disulfides connect Cys-28–Cys-55, Cys-35–Cys-49, and Cys-39–Cys-56.

It belongs to the beta-defensin family. As to expression, abundant expression in the male reproductive tract only. Abundant expressed in testis and the caput region of epididymis, but low in the corpus region.

It is found in the secreted. Has antibacterial activity. This is Beta-defensin 119 (DEFB119) from Homo sapiens (Human).